The following is a 427-amino-acid chain: 3-phosphoshikimate 1-carboxyvinyltransferase (427 aa).

Residues Lys22, Ser23, and Arg27 each coordinate 3-phosphoshikimate. Lys22 serves as a coordination point for phosphoenolpyruvate. 2 residues coordinate phosphoenolpyruvate: Gly96 and Arg124. Residues Ser169, Ser170, Gln171, Ser197, Asp313, Asn336, and Lys340 each coordinate 3-phosphoshikimate. Gln171 serves as a coordination point for phosphoenolpyruvate. Asp313 acts as the Proton acceptor in catalysis. Residues Arg344, Arg386, and Lys411 each contribute to the phosphoenolpyruvate site.

The protein belongs to the EPSP synthase family. In terms of assembly, monomer.

The protein resides in the cytoplasm. It carries out the reaction 3-phosphoshikimate + phosphoenolpyruvate = 5-O-(1-carboxyvinyl)-3-phosphoshikimate + phosphate. The protein operates within metabolic intermediate biosynthesis; chorismate biosynthesis; chorismate from D-erythrose 4-phosphate and phosphoenolpyruvate: step 6/7. Functionally, catalyzes the transfer of the enolpyruvyl moiety of phosphoenolpyruvate (PEP) to the 5-hydroxyl of shikimate-3-phosphate (S3P) to produce enolpyruvyl shikimate-3-phosphate and inorganic phosphate. The chain is 3-phosphoshikimate 1-carboxyvinyltransferase from Escherichia coli (strain SMS-3-5 / SECEC).